A 504-amino-acid polypeptide reads, in one-letter code: Probable alpha-L-arabinofuranosidase C (504 aa).

Residues Asn-152, Asn-181, and Asn-269 are each glycosylated (N-linked (GlcNAc...) asparagine).

The protein belongs to the glycosyl hydrolase 51 family.

The protein resides in the secreted. The catalysed reaction is Hydrolysis of terminal non-reducing alpha-L-arabinofuranoside residues in alpha-L-arabinosides.. It participates in glycan metabolism; L-arabinan degradation. Alpha-L-arabinofuranosidase involved in the degradation of arabinoxylan, a major component of plant hemicellulose. Acts only on small linear 1,5-alpha-linked L-arabinofuranosyl oligosaccharides. This chain is Probable alpha-L-arabinofuranosidase C (abfC), found in Aspergillus flavus (strain ATCC 200026 / FGSC A1120 / IAM 13836 / NRRL 3357 / JCM 12722 / SRRC 167).